The primary structure comprises 395 residues: Zinc finger protein HD1 (395 aa).

The B box-type 1; atypical zinc finger occupies 30–72; the sequence is PWARPCDGCRAAPSVVYCRADAAYLCASCDARVHAANRVASRH. Positions 35, 38, 58, 63, 78, 81, 101, and 106 each coordinate Zn(2+). The segment at 73–117 adopts a B box-type 2; atypical zinc-finger fold; the sequence is ERVRVCEACERAPAALACRADAAALCVACDVQVHSANPLPAITIP. 2 disordered regions span residues 147-176 and 208-228; these read SKDS…SNNG and GMHE…EFAE. The segment covering 152-175 has biased composition (low complexity); that stretch reads NNNNNNNNNDNDNNDNNNSNSSNN. The region spanning 326–368 is the CCT domain; it reads REARVLRYREKKKARKFEKTIRYETRKAYAEARPRIKGRFAKR.

This sequence belongs to the CONSTANS family. In terms of assembly, interacts with HAL3 in the dark. In terms of processing, phosphorylated by OSK4 in the presence of HDR1.

The protein localises to the nucleus. Probable transcription factor involved in the regulation of flower development. Required for the promotion of flowering under short day (SD) conditions and the suppression of flowering under long day (LD) conditions. Positively regulates the floral activator HEADING DATE 3a (HD3A) under SD and negatively under LD conditions. The polypeptide is Zinc finger protein HD1 (Oryza sativa subsp. japonica (Rice)).